The sequence spans 401 residues: MSKRLFTSESVTEGHPDKICDAISDTILDAMLTEDPQARVAVETVVTTGLVHVVGEVRTSGYVEIPQLVRDTLKEIGFTSSDMGFDGTTCGVSVSIGAQSPEIGAGVDTSHEVRGSSSTDEDDRQGAGDQGLMFGYATNETPEYMPLPISVAHRLSRRLTEVRKEEIVTGLRPDGKTQVTFEYDDAGTPVRLDTVVISTQHDPERTQDELRELLSEHVVGHVLADESLKPFVTEDLNLLVNPSGSFILGGPAGDAGLTGRKIIVDTYGGMARHGGGAFSGKDPSKVDRSAAYATRWVAKNIVAAGLADRAEVQVAYAIGVARPVGLYVETFGTEKAPVEDIQRAVAEVFDLRPASILRELDLLRPIYAQTAAYGHFGRNDLDLPWERLDKVEELKKAVGGN.

ATP is bound at residue H15. Position 17 (D17) interacts with Mg(2+). E43 contributes to the K(+) binding site. The L-methionine site is built by E56 and Q99. The segment at 99–109 (QSPEIGAGVDT) is flexible loop. The segment at 101–132 (PEIGAGVDTSHEVRGSSSTDEDDRQGAGDQGL) is disordered. ATP contacts are provided by residues 174 to 176 (DGK), D254, 260 to 261 (RK), A277, and K281. Residue D254 coordinates L-methionine. K285 contacts L-methionine.

It belongs to the AdoMet synthase family. In terms of assembly, homotetramer; dimer of dimers. It depends on Mg(2+) as a cofactor. Requires K(+) as cofactor.

Its subcellular location is the cytoplasm. It carries out the reaction L-methionine + ATP + H2O = S-adenosyl-L-methionine + phosphate + diphosphate. Its pathway is amino-acid biosynthesis; S-adenosyl-L-methionine biosynthesis; S-adenosyl-L-methionine from L-methionine: step 1/1. Its function is as follows. Catalyzes the formation of S-adenosylmethionine (AdoMet) from methionine and ATP. The overall synthetic reaction is composed of two sequential steps, AdoMet formation and the subsequent tripolyphosphate hydrolysis which occurs prior to release of AdoMet from the enzyme. The polypeptide is S-adenosylmethionine synthase (Corynebacterium urealyticum (strain ATCC 43042 / DSM 7109)).